Reading from the N-terminus, the 180-residue chain is ATP synthase subunit b (180 aa).

Residues 15 to 35 (LIPEVPELVIGLLAFAIVFFV) traverse the membrane as a helical segment.

This sequence belongs to the ATPase B chain family. F-type ATPases have 2 components, F(1) - the catalytic core - and F(0) - the membrane proton channel. F(1) has five subunits: alpha(3), beta(3), gamma(1), delta(1), epsilon(1). F(0) has three main subunits: a(1), b(2) and c(10-14). The alpha and beta chains form an alternating ring which encloses part of the gamma chain. F(1) is attached to F(0) by a central stalk formed by the gamma and epsilon chains, while a peripheral stalk is formed by the delta and b chains.

It is found in the cell membrane. Functionally, f(1)F(0) ATP synthase produces ATP from ADP in the presence of a proton or sodium gradient. F-type ATPases consist of two structural domains, F(1) containing the extramembraneous catalytic core and F(0) containing the membrane proton channel, linked together by a central stalk and a peripheral stalk. During catalysis, ATP synthesis in the catalytic domain of F(1) is coupled via a rotary mechanism of the central stalk subunits to proton translocation. Component of the F(0) channel, it forms part of the peripheral stalk, linking F(1) to F(0). This Streptomyces avermitilis (strain ATCC 31267 / DSM 46492 / JCM 5070 / NBRC 14893 / NCIMB 12804 / NRRL 8165 / MA-4680) protein is ATP synthase subunit b.